A 486-amino-acid polypeptide reads, in one-letter code: Outer dynein arm-docking complex subunit 4 (486 aa).

TPR repeat units lie at residues 14–47, 49–81, and 82–115; these read FTTY…QPDD, NCLV…NKNY, and FKGL…RPEL. A disordered region spans residues 153–180; it reads GVHPQNLNPSNKKESKKHSKKTDKGEKT. TPR repeat units follow at residues 314–347, 354–387, 391–424, and 431–464; these read GNLH…AKKC, SRAL…ACGG, AWLF…ADDI, and LNAS…AKLL.

As to quaternary structure, component of the outer dynein arm-docking complex along with ODAD1, ODAD2 and ODAD3.

It is found in the cytoplasm. The protein resides in the cytoskeleton. It localises to the cilium axoneme. In terms of biological role, component of the outer dynein arm-docking complex (ODA-DC) that mediates outer dynein arms (ODA) binding onto the doublet microtubule. Plays an essential role for the assembly of ODA-DC and in the docking of ODA in ciliary axoneme. In Danio rerio (Zebrafish), this protein is Outer dynein arm-docking complex subunit 4 (odad4).